The chain runs to 25 residues: TPLKESTCYLPKETGPCVGYFFRYY.

In terms of domain architecture, BPTI/Kunitz inhibitor spans 7–25 (TCYLPKETGPCVGYFFRYY).

It localises to the secreted. Functionally, inhibits trypsin, human plasma kallikrein and human neutrophil elastase. This is Kunitz-type serine protease inhibitor 4 from Rhipicephalus microplus (Cattle tick).